A 146-amino-acid chain; its full sequence is Large ribosomal subunit protein uL15 (146 aa).

The tract at residues 1-51 (MKLHELQPAAGSRKVRNRVGRGTSSGNGKTAGRGQKGQKARSGGGVRLGFE) is disordered. 2 stretches are compositionally biased toward gly residues: residues 23–35 (TSSG…GRGQ) and 42–51 (SGGGVRLGFE).

The protein belongs to the universal ribosomal protein uL15 family. Part of the 50S ribosomal subunit.

Its function is as follows. Binds to the 23S rRNA. The sequence is that of Large ribosomal subunit protein uL15 from Streptococcus gordonii (strain Challis / ATCC 35105 / BCRC 15272 / CH1 / DL1 / V288).